A 327-amino-acid polypeptide reads, in one-letter code: Olfactory receptor 9G4 (327 aa).

Over 1 to 43 (MIFPSHDSQAFTSVDMEVGNCTILTEFILLGFSADSQWQPILF) the chain is Extracellular. An N-linked (GlcNAc...) asparagine glycan is attached at Asn20. The chain crosses the membrane as a helical span at residues 44–64 (GVFLMLYLITLSGNMTLVILI). At 65–71 (RTDSHLH) the chain is on the cytoplasmic side. A helical transmembrane segment spans residues 72 to 92 (TPMYFFIGNLSFLDFWYTSVY). Residues 93–113 (TPKILASCVSEDKRISLAGCG) are Extracellular-facing. Cys112 and Cys194 are joined by a disulfide. The helical transmembrane segment at 114 to 134 (AQLFFSCVVAYTECYLLAAMA) threads the bilayer. The Cytoplasmic segment spans residues 135 to 152 (YDRHAAICNPLLYSGTMS). Residues 153 to 173 (TALCTGLVAGSYIGGFLNAIA) traverse the membrane as a helical segment. Topologically, residues 174 to 212 (HTANTFRLHFCGKNIIDHFFCDAPPLVKMSCTNTRVYEK) are extracellular. A helical membrane pass occupies residues 213–233 (VLLGVVGFTVLSSILAILISY). Topologically, residues 234–252 (VNILLAILRIHSASGRHKA) are cytoplasmic. A helical membrane pass occupies residues 253–273 (FSTCASHLISVMLFYGSLLFM). The Extracellular segment spans residues 274 to 286 (YSRPSSTYSLERD). Residues 287–307 (KVAALFYTVINPLLNPLIYSL) form a helical membrane-spanning segment. At 308–327 (RNKDIKEAFRKATQTIQPQT) the chain is on the cytoplasmic side.

This sequence belongs to the G-protein coupled receptor 1 family.

Its subcellular location is the cell membrane. Its function is as follows. Odorant receptor. In Homo sapiens (Human), this protein is Olfactory receptor 9G4 (OR9G4).